Reading from the N-terminus, the 121-residue chain is Small ribosomal subunit protein uS13 (121 aa).

The disordered stretch occupies residues 93–121 (KGLPMRGQRTRTNARTRKGPRRAAQALKK).

Belongs to the universal ribosomal protein uS13 family. As to quaternary structure, part of the 30S ribosomal subunit. Forms a loose heterodimer with protein S19. Forms two bridges to the 50S subunit in the 70S ribosome.

Its function is as follows. Located at the top of the head of the 30S subunit, it contacts several helices of the 16S rRNA. In the 70S ribosome it contacts the 23S rRNA (bridge B1a) and protein L5 of the 50S subunit (bridge B1b), connecting the 2 subunits; these bridges are implicated in subunit movement. Contacts the tRNAs in the A and P-sites. This chain is Small ribosomal subunit protein uS13, found in Burkholderia ambifaria (strain ATCC BAA-244 / DSM 16087 / CCUG 44356 / LMG 19182 / AMMD) (Burkholderia cepacia (strain AMMD)).